A 287-amino-acid polypeptide reads, in one-letter code: Inactive phospholipid phosphatase 7 (287 aa).

The disordered stretch occupies residues 1–75; the sequence is MPANQTRSRA…NNKDKKELPE (75 aa). Residues 1–120 lie on the Cytoplasmic side of the membrane; the sequence is MPANQTRSRA…SSSWGSVRSM (120 aa). A compositionally biased stretch (gly residues) spans 31 to 40; that stretch reads SGGGGGGGES. The span at 49 to 65 shows a compositional bias: low complexity; sequence QRQQQNQQQQGDNPQPE. A helical membrane pass occupies residues 121–141; that stretch reads VKLLALTGHGIPWVFGTIVCL. The Extracellular segment spans residues 142-146; sequence MRSNT. The helical transmembrane segment at 147-167 threads the bilayer; that stretch reads LAGQEVLVNLLLALLLDVMTV. At 168-215 the chain is on the cytoplasmic side; sequence SGMQKLVKRKGPWEMPPGFFDYLAMDIYSFPAAHASRAVMVSKFLLAH. Residues 216–236 traverse the membrane as a helical segment; it reads LVLAVPLRILLVLWAILVGIS. Topologically, residues 237-247 are extracellular; the sequence is RVLLGRHHLTD. Residues 248–268 traverse the membrane as a helical segment; it reads VGCGFALGFLHYSLVEMVWLS. Residues 269-287 lie on the Cytoplasmic side of the membrane; the sequence is SNTCQTLISIGTFNWSPLY.

Belongs to the PA-phosphatase related phosphoesterase family.

The protein resides in the nucleus envelope. Its subcellular location is the endoplasmic reticulum membrane. It localises to the membrane. Functionally, plays a role as negative regulator of myoblast differentiation, in part through effects on MTOR signaling. Has no detectable enzymatic activity. The polypeptide is Inactive phospholipid phosphatase 7 (Danio rerio (Zebrafish)).